The sequence spans 371 residues: Lysine racemase (371 aa).

The active-site Proton acceptor is the K39. Residue K39 is modified to N6-(pyridoxal phosphate)lysine. A substrate-binding site is contributed by R135. The active-site Proton acceptor is the Y266. M313 contributes to the substrate binding site.

This sequence belongs to the alanine racemase family. Homodimer. Pyridoxal 5'-phosphate is required as a cofactor.

The catalysed reaction is L-lysine = D-lysine. Catalyzes the interconversion of D-lysine and L-lysine. Can also use arginine and ornithine, but not alanine. The polypeptide is Lysine racemase (Oenococcus oeni (strain ATCC BAA-331 / PSU-1)).